The primary structure comprises 886 residues: Alanine--tRNA ligase (886 aa).

Zn(2+) is bound by residues histidine 564, histidine 568, cysteine 676, and histidine 680.

This sequence belongs to the class-II aminoacyl-tRNA synthetase family. It depends on Zn(2+) as a cofactor.

The protein localises to the cytoplasm. The catalysed reaction is tRNA(Ala) + L-alanine + ATP = L-alanyl-tRNA(Ala) + AMP + diphosphate. Functionally, catalyzes the attachment of alanine to tRNA(Ala) in a two-step reaction: alanine is first activated by ATP to form Ala-AMP and then transferred to the acceptor end of tRNA(Ala). Also edits incorrectly charged Ser-tRNA(Ala) and Gly-tRNA(Ala) via its editing domain. This Bartonella bacilliformis (strain ATCC 35685 / KC583 / Herrer 020/F12,63) protein is Alanine--tRNA ligase.